We begin with the raw amino-acid sequence, 176 residues long: Probable DNA-directed RNA polymerase subunit delta (176 aa).

The region spanning 14-81 (KSFIDMAYTL…GENLWGLRDW (68 aa)) is the HTH HARE-type domain. A disordered region spans residues 114 to 176 (LGEDEMDDDD…DFEDEEDFKA (63 aa)). 2 stretches are compositionally biased toward acidic residues: residues 116-145 (EDEM…QVEE) and 153-176 (VIEE…DFKA).

It belongs to the RpoE family. In terms of assembly, RNAP is composed of a core of 2 alpha, a beta and a beta' subunits. The core is associated with a delta subunit and one of several sigma factors.

Its function is as follows. Participates in both the initiation and recycling phases of transcription. In the presence of the delta subunit, RNAP displays an increased specificity of transcription, a decreased affinity for nucleic acids, and an increased efficiency of RNA synthesis because of enhanced recycling. This is Probable DNA-directed RNA polymerase subunit delta from Staphylococcus aureus (strain bovine RF122 / ET3-1).